Consider the following 471-residue polypeptide: 5-hydroxytryptamine receptor 2A (471 aa).

The Extracellular segment spans residues 1-80; the sequence is MDILCEENTS…LQEKNWSALL (80 aa). N-linked (GlcNAc...) asparagine glycans are attached at residues asparagine 8, asparagine 38, asparagine 44, asparagine 51, and asparagine 54. Residues 81-97 form a helical membrane-spanning segment; that stretch reads TAVVIILTIAGNILVIM. The Cytoplasmic portion of the chain corresponds to 98–111; it reads AVSLEKKLQNATNY. The helical transmembrane segment at 112-137 threads the bilayer; it reads FLMSLAIADMLLGFLVMPVSMLTILY. The Extracellular portion of the chain corresponds to 138 to 146; it reads GYRWPLPSK. A helical membrane pass occupies residues 147-171; the sequence is LCAVWIYLDVLFSTASIMHLCAISL. Residues cysteine 148 and cysteine 227 are joined by a disulfide bond. Aspartate 155 is a binding site for serotonin. Positions 172–174 match the DRY motif; important for ligand-induced conformation changes motif; the sequence is DRY. Topologically, residues 172 to 191 are cytoplasmic; the sequence is DRYVAIQNPIHHSRFNSRTK. Residues 192 to 215 traverse the membrane as a helical segment; it reads AFLKIIAVWTISVGISMPIPVFGL. At 216–232 the chain is on the extracellular side; it reads QDDSKVFKEGSCLLADD. A helical membrane pass occupies residues 233–258; the sequence is NFVLIGSFVSFFIPLTIMVITYFLTI. The Cytoplasmic portion of the chain corresponds to 259–322; the sequence is KSLQKEATLC…QSISNEQKAC (64 aa). Serine 280 bears the Phosphoserine mark. A helical transmembrane segment spans residues 323 to 348; the sequence is KVLGIVFFLFVVMWCPFFITNIMAVI. Asparagine 343 lines the serotonin pocket. An intrachain disulfide couples cysteine 349 to cysteine 353. The Extracellular portion of the chain corresponds to 349-356; it reads CKESCNED. Residues 357-382 traverse the membrane as a helical segment; the sequence is VIGALLNVFVWIGYLSSAVNPLVYTL. The short motif at 376-380 is the NPxxY motif; important for ligand-induced conformation changes and signaling element; sequence NPLVY. At 383–471 the chain is on the cytoplasmic side; that stretch reads FNKTYRSAFS…DGVNEKVSCV (89 aa). Residues 451–465 are compositionally biased toward basic and acidic residues; sequence QHSEEASKDNSDGVN. The tract at residues 451–471 is disordered; sequence QHSEEASKDNSDGVNEKVSCV. The short motif at 469-471 is the PDZ-binding element; that stretch reads SCV.

It belongs to the G-protein coupled receptor 1 family. As to quaternary structure, interacts (via C-terminus) with MPDZ and PATJ. May interact (via C-terminus) with MPP3, PRDX6, DLG4, DLG1, CASK, APBA1 and MAGI2. Interacts with GRM2 and DRD2; this may affect signaling. In terms of tissue distribution, detected in brain cortex (at protein level). Detected in blood platelets.

It localises to the cell membrane. It is found in the cell projection. The protein resides in the dendrite. The protein localises to the axon. Its subcellular location is the cytoplasmic vesicle. It localises to the membrane. It is found in the caveola. The protein resides in the presynapse. Its activity is regulated as follows. G-protein coupled receptor activity is regulated by lipids: oleamide increases HTR2A-mediated activity. Inhibited by IHCH-7179 small molecule: IHCH-7179 acts both as an agonist activator for HTR1A and as an antagonist inhibitor for HTR2A. G-protein coupled receptor for 5-hydroxytryptamine (serotonin). Also functions as a receptor for various drugs and psychoactive substances, including mescaline, psilocybin, 1-(2,5-dimethoxy-4-iodophenyl)-2-aminopropane (DOI) and lysergic acid diethylamide (LSD). Ligand binding causes a conformation change that triggers signaling via guanine nucleotide-binding proteins (G proteins) and modulates the activity of downstream effectors. HTR2A is coupled to G(q)/G(11) G alpha proteins and activates phospholipase C-beta, releasing diacylglycerol (DAG) and inositol 1,4,5-trisphosphate (IP3) second messengers that modulate the activity of phosphatidylinositol 3-kinase and promote the release of Ca(2+) ions from intracellular stores, respectively. Beta-arrestin family members inhibit signaling via G proteins and mediate activation of alternative signaling pathways. Affects neural activity, perception, cognition and mood. Plays a role in the regulation of behavior, including responses to anxiogenic situations and psychoactive substances. Plays a role in intestinal smooth muscle contraction, and may play a role in arterial vasoconstriction. In terms of biological role, (Microbial infection) Acts as a receptor for human JC polyomavirus/JCPyV. The polypeptide is 5-hydroxytryptamine receptor 2A (Homo sapiens (Human)).